We begin with the raw amino-acid sequence, 118 residues long: Small ribosomal subunit protein uS13 (118 aa).

The segment at 94–118 (GLPVHGQRTKTNARTRKGPAKSITR) is disordered.

It belongs to the universal ribosomal protein uS13 family. As to quaternary structure, part of the 30S ribosomal subunit. Forms a loose heterodimer with protein S19. Forms two bridges to the 50S subunit in the 70S ribosome.

Located at the top of the head of the 30S subunit, it contacts several helices of the 16S rRNA. In the 70S ribosome it contacts the 23S rRNA (bridge B1a) and protein L5 of the 50S subunit (bridge B1b), connecting the 2 subunits; these bridges are implicated in subunit movement. Contacts the tRNAs in the A and P-sites. The polypeptide is Small ribosomal subunit protein uS13 (Acidithiobacillus ferrooxidans (strain ATCC 23270 / DSM 14882 / CIP 104768 / NCIMB 8455) (Ferrobacillus ferrooxidans (strain ATCC 23270))).